We begin with the raw amino-acid sequence, 274 residues long: Phosphate import ATP-binding protein PstB (274 aa).

The segment covering 1 to 11 (MSEISIATSVP) has biased composition (polar residues). Residues 1-21 (MSEISIATSVPSGPGPLIGNQ) are disordered. The region spanning 28–269 (VIVRDLNFYY…PNDRRTQDYI (242 aa)) is the ABC transporter domain. Residue 60 to 67 (GPSGCGKS) coordinates ATP.

The protein belongs to the ABC transporter superfamily. Phosphate importer (TC 3.A.1.7) family. In terms of assembly, the complex is composed of two ATP-binding proteins (PstB), two transmembrane proteins (PstC and PstA) and a solute-binding protein (PstS).

It localises to the cell inner membrane. It carries out the reaction phosphate(out) + ATP + H2O = ADP + 2 phosphate(in) + H(+). Functionally, part of the ABC transporter complex PstSACB involved in phosphate import. Responsible for energy coupling to the transport system. This Rhodopseudomonas palustris (strain BisB5) protein is Phosphate import ATP-binding protein PstB.